A 333-amino-acid chain; its full sequence is Fructose-1,6-bisphosphatase class 1 1 (333 aa).

Mg(2+) is bound by residues E81, D100, L102, and D103. Substrate contacts are provided by residues 103–106 (DGSS) and N191. Residue E263 participates in Mg(2+) binding.

The protein belongs to the FBPase class 1 family. As to quaternary structure, homotetramer. Mg(2+) serves as cofactor.

The protein resides in the cytoplasm. The catalysed reaction is beta-D-fructose 1,6-bisphosphate + H2O = beta-D-fructose 6-phosphate + phosphate. The protein operates within carbohydrate biosynthesis; Calvin cycle. The polypeptide is Fructose-1,6-bisphosphatase class 1 1 (Cereibacter sphaeroides (strain ATCC 17023 / DSM 158 / JCM 6121 / CCUG 31486 / LMG 2827 / NBRC 12203 / NCIMB 8253 / ATH 2.4.1.) (Rhodobacter sphaeroides)).